The chain runs to 507 residues: Beta-glucosidase 12 (507 aa).

The first 22 residues, 1–22 (MRTIYLSLLVFIIVLALNEVMA), serve as a signal peptide directing secretion. A beta-D-glucoside is bound at residue Q50. N-linked (GlcNAc...) asparagine glycosylation occurs at N81. A beta-D-glucoside contacts are provided by residues H154 and 199–200 (NE). E200 (proton donor) is an active-site residue. A disulfide bridge connects residues C219 and C227. N226 carries N-linked (GlcNAc...) asparagine glycosylation. Y344 lines the a beta-D-glucoside pocket. Residue N358 is glycosylated (N-linked (GlcNAc...) asparagine). A beta-D-glucoside is bound by residues E414, W459, 466–467 (EW), and F475. E414 serves as the catalytic Nucleophile.

It belongs to the glycosyl hydrolase 1 family.

The enzyme catalyses Hydrolysis of terminal, non-reducing beta-D-glucosyl residues with release of beta-D-glucose.. This Arabidopsis thaliana (Mouse-ear cress) protein is Beta-glucosidase 12.